The sequence spans 157 residues: MRALYPGSFDPLTLGHLDLIERGCALFGEVVVAVLSNPAKTPAFTLQQRFNQIHVATAHCKGVSVISFDGLTVRCARHNQVDLILRGLRAMSDFEYELQIAHTNRSLAPDFETIFLATAAHHSFLSSSMVKEVARFGGNIDHMVPEVVAQDLHRLFN.

Substrate is bound at residue S8. ATP contacts are provided by residues 8–9 and H16; that span reads SF. 3 residues coordinate substrate: K40, T72, and R86. ATP-binding positions include 87 to 89, E97, and 122 to 128; these read GLR and HSFLSSS.

It belongs to the bacterial CoaD family. Homohexamer. Mg(2+) is required as a cofactor.

The protein resides in the cytoplasm. The enzyme catalyses (R)-4'-phosphopantetheine + ATP + H(+) = 3'-dephospho-CoA + diphosphate. It participates in cofactor biosynthesis; coenzyme A biosynthesis; CoA from (R)-pantothenate: step 4/5. Functionally, reversibly transfers an adenylyl group from ATP to 4'-phosphopantetheine, yielding dephospho-CoA (dPCoA) and pyrophosphate. The chain is Phosphopantetheine adenylyltransferase from Prochlorococcus marinus (strain MIT 9303).